Here is a 513-residue protein sequence, read N- to C-terminus: OTU domain-containing protein 5-A (513 aa).

Disordered stretches follow at residues 1-75 (MTIL…GGAG) and 99-136 (GPGH…DEYE). The 124-residue stretch at 166 to 289 (FIIKQMKEDG…NIHYNSVVNP (124 aa)) folds into the OTU domain. The cys-loop stretch occupies residues 171 to 177 (MKEDGAC). Residue Asp174 is part of the active site. Catalysis depends on Cys177, which acts as the Nucleophile. The segment at 226-236 (KRKNNCHGNHI) is variable-loop. Residues 277-282 (YHRNIH) form a his-loop region. Residue His282 is part of the active site. Residues 387-446 (LEEWSGRSPRQRSTAGSPEHPDLHAELCMKPPSPGAPLILGKPPSPCAPGPSNQMSTGAD) form a disordered region.

Belongs to the peptidase C85 family.

The enzyme catalyses Thiol-dependent hydrolysis of ester, thioester, amide, peptide and isopeptide bonds formed by the C-terminal Gly of ubiquitin (a 76-residue protein attached to proteins as an intracellular targeting signal).. Deubiquitinating enzyme that may function as negative regulator of the innate immune system. Has peptidase activity towards 'Lys-48'- and 'Lys-63'-linked polyubiquitin chains. Can also cleave 'Lys-11'-linked ubiquitin chains (in vitro). The chain is OTU domain-containing protein 5-A (otud5-a) from Xenopus laevis (African clawed frog).